Here is a 984-residue protein sequence, read N- to C-terminus: Putative formate dehydrogenase SA2102 (984 aa).

The region spanning glutamate 3 to aspartate 79 is the 2Fe-2S ferredoxin-type domain. Residues cysteine 37, cysteine 48, cysteine 51, and cysteine 63 each contribute to the [2Fe-2S] cluster site. In terms of domain architecture, 4Fe-4S His(Cys)3-ligated-type spans aspartate 79–glycine 119. Residues histidine 95, cysteine 99, cysteine 102, cysteine 109, cysteine 147, cysteine 150, cysteine 153, cysteine 157, cysteine 190, cysteine 193, cysteine 196, cysteine 200, cysteine 264, cysteine 267, cysteine 271, and cysteine 299 each contribute to the [4Fe-4S] cluster site. 2 4Fe-4S ferredoxin-type domains span residues proline 138–threonine 165 and asparagine 181–glutamate 211. The formate dehydrogenase stretch occupies residues methionine 252–lysine 984. Residues isoleucine 257–glutamine 313 form the 4Fe-4S Mo/W bis-MGD-type domain.

It in the C-terminal section; belongs to the prokaryotic molybdopterin-containing oxidoreductase family. The cofactor is [2Fe-2S] cluster. It depends on [4Fe-4S] cluster as a cofactor. Mo-bis(molybdopterin guanine dinucleotide) is required as a cofactor.

The catalysed reaction is formate + NAD(+) = CO2 + NADH. This Staphylococcus aureus (strain N315) protein is Putative formate dehydrogenase SA2102.